Here is an 80-residue protein sequence, read N- to C-terminus: Putative antitoxin VapB44 (80 aa).

Residues 40–68 are disordered; it reads NQNPQPAASQEDAFHGFEPLPHRGGAVSN.

Functionally, possibly the antitoxin component of a type II toxin-antitoxin (TA) system. Its cognate toxin is VapC44 (Potential). The chain is Putative antitoxin VapB44 (vapB44) from Mycobacterium tuberculosis (strain CDC 1551 / Oshkosh).